A 383-amino-acid polypeptide reads, in one-letter code: 3-dehydroquinate synthase (383 aa).

NAD(+) contacts are provided by residues 81–86 (EGEVSK), 115–119 (GVVGD), 139–140 (TS), lysine 152, and lysine 161. 3 residues coordinate Zn(2+): glutamate 194, histidine 256, and histidine 274.

This sequence belongs to the sugar phosphate cyclases superfamily. Dehydroquinate synthase family. Requires Co(2+) as cofactor. Zn(2+) is required as a cofactor. NAD(+) serves as cofactor.

It is found in the cytoplasm. It carries out the reaction 7-phospho-2-dehydro-3-deoxy-D-arabino-heptonate = 3-dehydroquinate + phosphate. It functions in the pathway metabolic intermediate biosynthesis; chorismate biosynthesis; chorismate from D-erythrose 4-phosphate and phosphoenolpyruvate: step 2/7. Catalyzes the conversion of 3-deoxy-D-arabino-heptulosonate 7-phosphate (DAHP) to dehydroquinate (DHQ). This chain is 3-dehydroquinate synthase, found in Nitrobacter hamburgensis (strain DSM 10229 / NCIMB 13809 / X14).